We begin with the raw amino-acid sequence, 372 residues long: MKISPEILNLVPYKPGKPISETQREYGLTTVYKLASNENPLGPSPKAMAAVKQALDHQHLYPDPSHYELLQTLSKEWGFPTKQLAIGNGSDELIDLLCRIYCEHHDGVLTSAAAFNAYEVSAPANRAVIHKVPMAEGYRFDLPAIADYFLKHPEKNIRLIFVSNPNNPTGTYATKAEVEAFLQKVGNRDDVMIIFDEAYNEFVRAKDYASAQGYMGQYKNLIVLRTFSKIYGLAGFRLGAMIAPPEVVEVFNRVRKPFNVNDLAQVAANAALQDKEFIERSQQICWKGLDYFYKKLEELGLPYIPSQGNFVMFDTLRDAAKVNEALLRRGIIMRPLLNYGFKTHLRLSVGRDHENEAAMVALAEVLKEITPL.

Lysine 229 is modified (N6-(pyridoxal phosphate)lysine).

This sequence belongs to the class-II pyridoxal-phosphate-dependent aminotransferase family. Histidinol-phosphate aminotransferase subfamily. Homodimer. It depends on pyridoxal 5'-phosphate as a cofactor.

It carries out the reaction L-histidinol phosphate + 2-oxoglutarate = 3-(imidazol-4-yl)-2-oxopropyl phosphate + L-glutamate. It functions in the pathway amino-acid biosynthesis; L-histidine biosynthesis; L-histidine from 5-phospho-alpha-D-ribose 1-diphosphate: step 7/9. This is Histidinol-phosphate aminotransferase from Bdellovibrio bacteriovorus (strain ATCC 15356 / DSM 50701 / NCIMB 9529 / HD100).